A 725-amino-acid polypeptide reads, in one-letter code: Phosphoribosylformylglycinamidine synthase subunit PurL (725 aa).

Histidine 42 is an active-site residue. Tyrosine 45 and lysine 84 together coordinate ATP. Glutamate 86 serves as a coordination point for Mg(2+). Residues 87-90 (SHNH) and arginine 109 each bind substrate. Histidine 88 functions as the Proton acceptor in the catalytic mechanism. Aspartate 110 is a binding site for Mg(2+). Glutamine 237 is a substrate binding site. Residue aspartate 265 coordinates Mg(2+). 309–311 (ESQ) is a substrate binding site. Aspartate 491 and glycine 528 together coordinate ATP. Mg(2+) is bound at residue asparagine 529. Serine 531 lines the substrate pocket.

Belongs to the FGAMS family. Monomer. Part of the FGAM synthase complex composed of 1 PurL, 1 PurQ and 2 PurS subunits.

Its subcellular location is the cytoplasm. The enzyme catalyses N(2)-formyl-N(1)-(5-phospho-beta-D-ribosyl)glycinamide + L-glutamine + ATP + H2O = 2-formamido-N(1)-(5-O-phospho-beta-D-ribosyl)acetamidine + L-glutamate + ADP + phosphate + H(+). It functions in the pathway purine metabolism; IMP biosynthesis via de novo pathway; 5-amino-1-(5-phospho-D-ribosyl)imidazole from N(2)-formyl-N(1)-(5-phospho-D-ribosyl)glycinamide: step 1/2. Its function is as follows. Part of the phosphoribosylformylglycinamidine synthase complex involved in the purines biosynthetic pathway. Catalyzes the ATP-dependent conversion of formylglycinamide ribonucleotide (FGAR) and glutamine to yield formylglycinamidine ribonucleotide (FGAM) and glutamate. The FGAM synthase complex is composed of three subunits. PurQ produces an ammonia molecule by converting glutamine to glutamate. PurL transfers the ammonia molecule to FGAR to form FGAM in an ATP-dependent manner. PurS interacts with PurQ and PurL and is thought to assist in the transfer of the ammonia molecule from PurQ to PurL. This chain is Phosphoribosylformylglycinamidine synthase subunit PurL, found in Campylobacter lari (strain RM2100 / D67 / ATCC BAA-1060).